A 570-amino-acid chain; its full sequence is Urease subunit alpha (570 aa).

The Urease domain occupies 131–570; it reads GGFDAHIHFI…LPMAQRYFLF (440 aa). Positions 136, 138, and 219 each coordinate Ni(2+). Position 219 is an N6-carboxylysine (Lys-219). Residue His-221 coordinates substrate. Ni(2+) contacts are provided by His-248 and His-274. His-322 acts as the Proton donor in catalysis. Asp-362 provides a ligand contact to Ni(2+).

The protein belongs to the metallo-dependent hydrolases superfamily. Urease alpha subunit family. As to quaternary structure, heterotrimer of UreA (gamma), UreB (beta) and UreC (alpha) subunits. Three heterotrimers associate to form the active enzyme. Ni cation is required as a cofactor. Carboxylation allows a single lysine to coordinate two nickel ions.

It localises to the cytoplasm. It carries out the reaction urea + 2 H2O + H(+) = hydrogencarbonate + 2 NH4(+). Its pathway is nitrogen metabolism; urea degradation; CO(2) and NH(3) from urea (urease route): step 1/1. This Chelativorans sp. (strain BNC1) protein is Urease subunit alpha.